A 1847-amino-acid polypeptide reads, in one-letter code: Cilia- and flagella-associated protein 65 (1847 aa).

A helical transmembrane segment spans residues 112–132 (FFTIIPQPIFLSPGITLTLPI). The region spanning 805–914 (DLKLDTHKSI…VHYRIRLVGM (110 aa)) is the MSP domain. The stretch at 1457-1483 (QRELMRQYHKELQEWNEEKARQEVEFT) forms a coiled coil. Residues 1668-1721 (YEGRKSKEQEEDLFGKMPGGQEDDEEEEEDEEEAEEEEEEIEEEMSKDEEDIDK) are disordered. A compositionally biased stretch (acidic residues) spans 1688-1720 (QEDDEEEEEDEEEAEEEEEEIEEEMSKDEEDID).

This sequence belongs to the CFAP65 family. As to quaternary structure, interacts with CFAP47. As to expression, predominantly expressed in testis. Highly expressed in round and elongating spermatids. Expressed also in certain ciliated organs, such as the brain, lung and kidney.

The protein localises to the cell projection. It is found in the cilium. Its subcellular location is the flagellum membrane. It localises to the cytoplasmic vesicle. The protein resides in the secretory vesicle. The protein localises to the acrosome membrane. It is found in the cytoplasm. Plays a role in flagellar formation and sperm motility. This is Cilia- and flagella-associated protein 65 from Mus musculus (Mouse).